Consider the following 229-residue polypeptide: Enolase-phosphatase E1 (229 aa).

The protein belongs to the HAD-like hydrolase superfamily. MasA/MtnC family. As to quaternary structure, monomer. Requires Mg(2+) as cofactor.

It catalyses the reaction 5-methylsulfanyl-2,3-dioxopentyl phosphate + H2O = 1,2-dihydroxy-5-(methylsulfanyl)pent-1-en-3-one + phosphate. Its pathway is amino-acid biosynthesis; L-methionine biosynthesis via salvage pathway; L-methionine from S-methyl-5-thio-alpha-D-ribose 1-phosphate: step 3/6. It participates in amino-acid biosynthesis; L-methionine biosynthesis via salvage pathway; L-methionine from S-methyl-5-thio-alpha-D-ribose 1-phosphate: step 4/6. Functionally, bifunctional enzyme that catalyzes the enolization of 2,3-diketo-5-methylthiopentyl-1-phosphate (DK-MTP-1-P) into the intermediate 2-hydroxy-3-keto-5-methylthiopentenyl-1-phosphate (HK-MTPenyl-1-P), which is then dephosphorylated to form the acireductone 1,2-dihydroxy-3-keto-5-methylthiopentene (DHK-MTPene). The protein is Enolase-phosphatase E1 of Yersinia enterocolitica serotype O:8 / biotype 1B (strain NCTC 13174 / 8081).